A 210-amino-acid chain; its full sequence is A-kinase-interacting protein 1 (210 aa).

Disordered stretches follow at residues 58–80 (HLEKQPAAGPQRVLPGEREERPP) and 136–162 (QRKDRKKTSLGPGGSYQISEHAPEASQ).

Interacts with PRKACA and RELA. In terms of tissue distribution, expressed at high levels in adult heart and at lower levels in brain, testis, ovary and skeletal muscle. Up-regulated in some breast cancer cell lines. Isoform 1 and isoform 3 are expressed in fetal brain.

The protein resides in the nucleus. Functionally, enhances NF-kappa-B transcriptional activity by regulating the nuclear localization of the NF-kappa-B subunit RELA and promoting the phosphorylation of RELA by PRKACA. Regulates the effect of the cAMP-dependent protein kinase signaling pathway on the NF-kappa-B activation cascade. The polypeptide is A-kinase-interacting protein 1 (AKIP1) (Homo sapiens (Human)).